A 77-amino-acid polypeptide reads, in one-letter code: Acyl carrier protein (77 aa).

In terms of domain architecture, Carrier spans 2–77; it reads STIEERVKKI…EAIDYVVSHQ (76 aa). Serine 37 carries the post-translational modification O-(pantetheine 4'-phosphoryl)serine.

Belongs to the acyl carrier protein (ACP) family. In terms of processing, 4'-phosphopantetheine is transferred from CoA to a specific serine of apo-ACP by AcpS. This modification is essential for activity because fatty acids are bound in thioester linkage to the sulfhydryl of the prosthetic group.

Its subcellular location is the cytoplasm. It participates in lipid metabolism; fatty acid biosynthesis. In terms of biological role, carrier of the growing fatty acid chain in fatty acid biosynthesis. The polypeptide is Acyl carrier protein (Oceanospirillum linum).